The chain runs to 497 residues: 4,4'-diaponeurosporene oxygenase (497 aa).

Position 7–19 (7–19) interacts with FAD; the sequence is VIGGGLGGISAAI.

This sequence belongs to the carotenoid/retinoid oxidoreductase family. CrtP subfamily. The cofactor is FAD.

The enzyme catalyses all-trans-4,4'-diaponeurosporene + 2 AH2 + 2 O2 = 4,4'-diaponeurosporenal + 2 A + 3 H2O. It functions in the pathway carotenoid biosynthesis; staphyloxanthin biosynthesis; staphyloxanthin from farnesyl diphosphate: step 3/5. Its function is as follows. Involved in the biosynthesis of the yellow-orange carotenoid staphyloxanthin, which plays a role in the virulence via its protective function against oxidative stress. Catalyzes the oxidation of the terminal methyl side group of 4,4'-diaponeurosporene to form 4,4'-diaponeurosporen-4-al. The sequence is that of 4,4'-diaponeurosporene oxygenase from Staphylococcus aureus (strain MSSA476).